The primary structure comprises 497 residues: Signal recognition particle subunit SRP54 2 (497 aa).

The segment at 1–295 is G-domain; the sequence is MVLAQLGGSI…DVKPFVSRLL (295 aa). GTP is bound by residues 108-115, 190-194, and 248-251; these read GLQGSGKT, DTSGR, and TKLD. Positions 296–497 are M-domain; that stretch reads GMGDLSGLMD…MLGGMGLGGD (202 aa).

This sequence belongs to the GTP-binding SRP family. SRP54 subfamily. In terms of assembly, component of a signal recognition particle (SRP) complex that consists of a 7SL RNA molecule of 300 nucleotides and six protein subunits: SRP72, SRP68, SRP54, SRP19, SRP14 and SRP9.

The protein localises to the cytoplasm. Its subcellular location is the endoplasmic reticulum. The enzyme catalyses GTP + H2O = GDP + phosphate + H(+). Its function is as follows. Component of the signal recognition particle (SRP) complex, a ribonucleoprotein complex that mediates the cotranslational targeting of secretory and membrane proteins to the endoplasmic reticulum (ER). As part of the SRP complex, associates with the SRP receptor (SR) component SRPRA to target secretory proteins to the endoplasmic reticulum membrane. Binds to the signal sequence of presecretory proteins when they emerge from the ribosomes. Displays basal GTPase activity, and stimulates reciprocal GTPase activation of the SR subunit SRPRA. Forms a guanosine 5'-triphosphate (GTP)-dependent complex with the SR subunit SRPRA. SR compaction and GTPase mediated rearrangement of SR drive SRP-mediated cotranslational protein translocation into the ER. Requires the presence of SRP9/SRP14 and/or SRP19 to stably interact with RNA. This Hordeum vulgare (Barley) protein is Signal recognition particle subunit SRP54 2 (SRP54-2).